The sequence spans 591 residues: NADP-dependent malic enzyme (591 aa).

Tyr-139 (proton donor) is an active-site residue. Residue Arg-192 coordinates NAD(+). Lys-210 acts as the Proton acceptor in catalysis. The a divalent metal cation site is built by Glu-282, Asp-283, and Asp-306. Position 306 (Asp-306) interacts with NAD(+). 335 to 351 (LFLGAGEAGTGIAELIA) contributes to the NADP(+) binding site. Asn-447 is an NAD(+) binding site.

The protein belongs to the malic enzymes family. Homotetramer. Mg(2+) serves as cofactor. Requires Mn(2+) as cofactor.

Its subcellular location is the cytoplasm. It carries out the reaction (S)-malate + NADP(+) = pyruvate + CO2 + NADPH. The catalysed reaction is oxaloacetate + H(+) = pyruvate + CO2. The chain is NADP-dependent malic enzyme from Vitis vinifera (Grape).